We begin with the raw amino-acid sequence, 222 residues long: von Willebrand factor C domain-containing protein 2-like (222 aa).

Residues 1–21 (MALHIHEACILLLVIPGLVTS) form the signal peptide. VWFC domains lie at 51–110 (KGCV…PECK) and 114–172 (NFCE…PVCK).

Peripherally associated with AMPAR complex. AMPAR complex consists of an inner core made of 4 pore-forming GluA/GRIA proteins (GRIA1, GRIA2, GRIA3 and GRIA4) and 4 major auxiliary subunits arranged in a twofold symmetry. One of the two pairs of distinct binding sites is occupied either by CNIH2, CNIH3 or CACNG2, CACNG3. The other harbors CACNG2, CACNG3, CACNG4, CACNG8 or GSG1L. This inner core of AMPAR complex is complemented by outer core constituents binding directly to the GluA/GRIA proteins at sites distinct from the interaction sites of the inner core constituents. Outer core constituents include at least PRRT1, PRRT2, CKAMP44/SHISA9, FRRS1L and NRN1. The proteins of the inner and outer core serve as a platform for other, more peripherally associated AMPAR constituents, including VWC2L. Alone or in combination, these auxiliary subunits control the gating and pharmacology of the AMPAR complex and profoundly impact their biogenesis and protein processing. As to expression, predominantly expressed in the brain (at protein level). Also detected in bones, including femur and calvaria, heart, lung and kidney. Isoform 5 is predominant in lung and heart, compared to isoforms 1 and 3. Isoform 4 is expressed in femur and calvaria at higher levels than isoforms 1 and 5. Isoforms 1 and 4 are expressed at higher levels than isoform 5 in kidney and brain.

It localises to the secreted. It is found in the synapse. Its function is as follows. May play a role in neurogenesis. May promote matrix mineralization, but has been shown to weakly, but significantly inhibit BMP2 and BMP6 activity in a preosteoblastic cell line. The protein is von Willebrand factor C domain-containing protein 2-like (Vwc2l) of Mus musculus (Mouse).